The chain runs to 59 residues: Large ribosomal subunit protein uL30 (59 aa).

It belongs to the universal ribosomal protein uL30 family. In terms of assembly, part of the 50S ribosomal subunit.

The protein is Large ribosomal subunit protein uL30 of Mycolicibacterium vanbaalenii (strain DSM 7251 / JCM 13017 / BCRC 16820 / KCTC 9966 / NRRL B-24157 / PYR-1) (Mycobacterium vanbaalenii).